We begin with the raw amino-acid sequence, 265 residues long: Undecaprenyl-diphosphatase 1 (265 aa).

7 helical membrane passes run 4 to 24 (IIIA…PISS), 42 to 62 (AKTF…ILYH), 84 to 104 (FHVF…HDVI), 108 to 128 (LFQP…MIFA), 184 to 204 (SEFS…LDLL), 217 to 237 (MFAV…VTFL), and 245 to 265 (LKPF…FVLL).

It belongs to the UppP family.

The protein localises to the cell membrane. It catalyses the reaction di-trans,octa-cis-undecaprenyl diphosphate + H2O = di-trans,octa-cis-undecaprenyl phosphate + phosphate + H(+). Its function is as follows. Catalyzes the dephosphorylation of undecaprenyl diphosphate (UPP). Confers resistance to bacitracin. This is Undecaprenyl-diphosphatase 1 from Bacillus thuringiensis (strain Al Hakam).